The sequence spans 179 residues: Ubiquitin-conjugating enzyme E2 C (179 aa).

The interval 1–31 is disordered; the sequence is MASQNRDPAATSVAAARKGAEPSGGAARGPV. Residue A2 is modified to N-acetylalanine. At S3 the chain carries Phosphoserine. In terms of domain architecture, UBC core spans 30 to 175; the sequence is PVGKRLQQEL…LQETYSKQVT (146 aa). C114 acts as the Glycyl thioester intermediate in catalysis.

Belongs to the ubiquitin-conjugating enzyme family. As to quaternary structure, component of the APC/C complex, composed of at least 14 distinct subunits that assemble into a complex of at least 19 chains with a combined molecular mass of around 1.2 MDa. Within this complex, directly interacts with ANAPC2. Post-translationally, autoubiquitinated by the APC/C complex, leading to its degradation by the proteasome. Its degradation plays a central role in APC/C regulation, allowing cyclin-A accumulation before S phase entry. APC/C substrates inhibit the autoubiquitination of UBE2C/UBCH10 but not its E2 function, hence APC/C remaining active until its substrates have been destroyed.

The catalysed reaction is S-ubiquitinyl-[E1 ubiquitin-activating enzyme]-L-cysteine + [E2 ubiquitin-conjugating enzyme]-L-cysteine = [E1 ubiquitin-activating enzyme]-L-cysteine + S-ubiquitinyl-[E2 ubiquitin-conjugating enzyme]-L-cysteine.. It carries out the reaction S-ubiquitinyl-[E1 ubiquitin-activating enzyme]-L-cysteine + [acceptor protein]-L-lysine = [E1 ubiquitin-activating enzyme]-L-cysteine + N(6)-monoubiquitinyl-[acceptor protein]-L-lysine.. It participates in protein modification; protein ubiquitination. Functionally, accepts ubiquitin from the E1 complex and catalyzes its covalent attachment to other proteins. In vitro catalyzes 'Lys-11'- and 'Lys-48'-linked polyubiquitination. Acts as an essential factor of the anaphase promoting complex/cyclosome (APC/C), a cell cycle-regulated ubiquitin ligase that controls progression through mitosis. Acts by initiating 'Lys-11'-linked polyubiquitin chains on APC/C substrates, leading to the degradation of APC/C substrates by the proteasome and promoting mitotic exit. This is Ubiquitin-conjugating enzyme E2 C (UBE2C) from Homo sapiens (Human).